A 67-amino-acid polypeptide reads, in one-letter code: U-myrmeciitoxin(01)-Mg4a (67 aa).

The first 25 residues, 1-25 (MGKVFFFVLMIAIIGSTFLIEEALG), serve as a signal peptide directing secretion.

Belongs to the ant myrmeciitoxin-01 family. As to quaternary structure, homodimer; disulfide-linked. Post-translationally, contains 2 intrachain disulfide bonds (one per chain) and 1 interchain disulfide bond. Expressed by the venom gland.

The protein resides in the secreted. The protein is U-myrmeciitoxin(01)-Mg4a of Myrmecia gulosa (Red bulldog ant).